The following is a 443-amino-acid chain: C4-dicarboxylate transport protein (443 aa).

9 helical membrane-spanning segments follow: residues 17–37 (PFYSHLYVQVLAAIAAGILLG), 57–77 (LVKMIIAPVIFLTVATGIAGM), 92–112 (LYFLTFSTLALVIGMVVANVV), 139–159 (EQSIVGFLTNIIPTTIVGAFA), 161–181 (GDILQVLFFSVLFGIALAMVG), 201–221 (LVAILMKAAPIGAFGAMAFTI), 234–254 (MLIGTFYLTSLLFVLVVLGAV), 320–340 (IYMTLAALFIAQATGINLSWG), and 368–388 (AATLSVVPSVPVAGMALILGI).

It belongs to the dicarboxylate/amino acid:cation symporter (DAACS) (TC 2.A.23) family.

The protein localises to the cell inner membrane. Functionally, responsible for the transport of dicarboxylates such as succinate, fumarate, and malate from the periplasm across the membrane. The sequence is that of C4-dicarboxylate transport protein from Rhizobium leguminosarum bv. trifolii (strain WSM2304).